A 202-amino-acid polypeptide reads, in one-letter code: Inner membrane-spanning protein YciB (202 aa).

6 helical membrane-spanning segments follow: residues 3 to 23 (FFLD…AGAA), 46 to 66 (ILIA…IVWL), 74 to 94 (MLWV…VFHN), 100 to 120 (WKPT…ALLF), 145 to 165 (LAWI…AYGY), and 173 to 193 (FKLF…GFYL).

It belongs to the YciB family.

The protein resides in the cell inner membrane. Plays a role in cell envelope biogenesis, maintenance of cell envelope integrity and membrane homeostasis. This chain is Inner membrane-spanning protein YciB, found in Azoarcus sp. (strain BH72).